The sequence spans 217 residues: ATP-dependent Clp protease proteolytic subunit (217 aa).

The active-site Nucleophile is the Ser-121. His-146 is an active-site residue.

The protein belongs to the peptidase S14 family. Fourteen ClpP subunits assemble into 2 heptameric rings which stack back to back to give a disk-like structure with a central cavity, resembling the structure of eukaryotic proteasomes.

Its subcellular location is the cytoplasm. The catalysed reaction is Hydrolysis of proteins to small peptides in the presence of ATP and magnesium. alpha-casein is the usual test substrate. In the absence of ATP, only oligopeptides shorter than five residues are hydrolyzed (such as succinyl-Leu-Tyr-|-NHMec, and Leu-Tyr-Leu-|-Tyr-Trp, in which cleavage of the -Tyr-|-Leu- and -Tyr-|-Trp bonds also occurs).. Functionally, cleaves peptides in various proteins in a process that requires ATP hydrolysis. Has a chymotrypsin-like activity. Plays a major role in the degradation of misfolded proteins. This is ATP-dependent Clp protease proteolytic subunit from Burkholderia vietnamiensis (strain G4 / LMG 22486) (Burkholderia cepacia (strain R1808)).